The following is a 565-amino-acid chain: CTP synthase (565 aa).

Residues Met1–Ile272 are amidoligase domain. Ser18 serves as a coordination point for CTP. Ser18 provides a ligand contact to UTP. Position 19–24 (Ser19–Ile24) interacts with ATP. Residue Tyr59 coordinates L-glutamine. Asp76 serves as a coordination point for ATP. 2 residues coordinate Mg(2+): Asp76 and Glu146. CTP-binding positions include Asp153 to Glu155, Lys193 to Gln198, and Lys229. Residues Lys193–Gln198 and Lys229 contribute to the UTP site. In terms of domain architecture, Glutamine amidotransferase type-1 spans Thr299–Gly543. Gly363 contributes to the L-glutamine binding site. Residue Cys390 is the Nucleophile; for glutamine hydrolysis of the active site. Residues Leu391 to Gln394, Glu414, and Arg471 contribute to the L-glutamine site. Active-site residues include His516 and Glu518.

The protein belongs to the CTP synthase family. Homotetramer.

The enzyme catalyses UTP + L-glutamine + ATP + H2O = CTP + L-glutamate + ADP + phosphate + 2 H(+). The catalysed reaction is L-glutamine + H2O = L-glutamate + NH4(+). It carries out the reaction UTP + NH4(+) + ATP = CTP + ADP + phosphate + 2 H(+). It functions in the pathway pyrimidine metabolism; CTP biosynthesis via de novo pathway; CTP from UDP: step 2/2. Its activity is regulated as follows. Allosterically activated by GTP, when glutamine is the substrate; GTP has no effect on the reaction when ammonia is the substrate. The allosteric effector GTP functions by stabilizing the protein conformation that binds the tetrahedral intermediate(s) formed during glutamine hydrolysis. Inhibited by the product CTP, via allosteric rather than competitive inhibition. Catalyzes the ATP-dependent amination of UTP to CTP with either L-glutamine or ammonia as the source of nitrogen. Regulates intracellular CTP levels through interactions with the four ribonucleotide triphosphates. The chain is CTP synthase from Chlorobium phaeobacteroides (strain BS1).